Consider the following 128-residue polypeptide: MAPVKKPAAKGGKKKKQVLKFTLDCTHPVEDGIMDAANFEQFLQERIKVNGKAGNLGGGVVTIERSKSKITVTSEVPFSKRYLKYLTKKYLKKNNLRDWLRVVANSKESYELRYFQINQDEEEEEEED.

The protein belongs to the eukaryotic ribosomal protein eL22 family. Component of the large ribosomal subunit.

It is found in the cytoplasm. Functionally, component of the large ribosomal subunit. The ribosome is a large ribonucleoprotein complex responsible for the synthesis of proteins in the cell. This Gallus gallus (Chicken) protein is Large ribosomal subunit protein eL22 (RPL22).